A 913-amino-acid chain; its full sequence is MLENEYQLEYFKENGFIRKICKKCGSAFWTLDPNREICGDAPCEPYQFIGNPIFTKHSLTEMREAYLSFFERHGHTRINRYPVAARWRDDIYLTIASIADFQPFVTSGVCPPPANPLTISQPCIRLNDLDNVGRSGRHFTCFEMMAHHAFNTDEKPIYWKDRCLELCSGFIESLGGNVFDLTYKENPWFGGGNAGPSVEVLMGGLEVATLVFMNLSRKNSGKPPVSIDGKDYYEMPLRIVDTGYGLERFTWASCGTPTAYDAVFPEMIPRILTAAGMEDRLENPEVERILGLNAKFAGLMDIRGEKIRDLRQQVADATNISVAKLEEIIVPMETVYALCDHTRCLAYMLGDLIVPSNVREGYLARLVLRRSIRMMQDLNMDDDLGDLVVSQMKTIGLANFEQDEDIVRHIINREVEKYDTTIERGTRTVQRVGQTYVKKNEPVPLAELITLYDSHGIPVDLMGKILKDTGAEFEIPDDFDSQIADMHSENETEKPVSPLAKYAERIAKIPETRKSFYERPADMEFDATVLDIFDNYVVLDATLFYPEGGGQPSDTGMLVTKSTMVRVDEVVKWENVILHKVRENTLKRGDRVKGVLDEDRRWALMRHHSATHMVLRAAKEVLGPHVHQAGSQLSTDVARLDIRHYTHITPEELKQMETIANRLVMENLPTMVKIENRVKAEQKFGFALYQGGVPPGKDIRVVQMGAEVQACAGTHCQSTGEIGPIKILKLEHIQDGVERIEFAAGFAALDAMQHIQSLLNTSADTLSVQTENLPGSVDRFFTEWKDQRKEIEKLRAKIAELELSRIEGINIGGVEVVIKQIDVSRKELVTVAGKIAERGGVTVLITTADGLGVVASSGTGKIHAGKLVGEVCAELGGKGGGKENLAQGAGADPSAVGKALLKAESFIRAEFNS.

Zn(2+)-binding residues include histidine 608, histidine 612, cysteine 711, and histidine 715.

The protein belongs to the class-II aminoacyl-tRNA synthetase family. The cofactor is Zn(2+).

It localises to the cytoplasm. The enzyme catalyses tRNA(Ala) + L-alanine + ATP = L-alanyl-tRNA(Ala) + AMP + diphosphate. Its function is as follows. Catalyzes the attachment of alanine to tRNA(Ala) in a two-step reaction: alanine is first activated by ATP to form Ala-AMP and then transferred to the acceptor end of tRNA(Ala). Also edits incorrectly charged Ser-tRNA(Ala) and Gly-tRNA(Ala) via its editing domain. In Methanocorpusculum labreanum (strain ATCC 43576 / DSM 4855 / Z), this protein is Alanine--tRNA ligase.